Here is a 161-residue protein sequence, read N- to C-terminus: Cyclic pyranopterin monophosphate synthase (161 aa).

Substrate contacts are provided by residues 75–77 and 115–116; these read MCH and ME. The active site involves Asp-130.

The protein belongs to the MoaC family. Homohexamer; trimer of dimers.

The catalysed reaction is (8S)-3',8-cyclo-7,8-dihydroguanosine 5'-triphosphate = cyclic pyranopterin phosphate + diphosphate. It functions in the pathway cofactor biosynthesis; molybdopterin biosynthesis. Functionally, catalyzes the conversion of (8S)-3',8-cyclo-7,8-dihydroguanosine 5'-triphosphate to cyclic pyranopterin monophosphate (cPMP). The protein is Cyclic pyranopterin monophosphate synthase of Bacillus mycoides (strain KBAB4) (Bacillus weihenstephanensis).